The chain runs to 112 residues: Na(+)/H(+) antiporter subunit C (112 aa).

Helical transmembrane passes span 4–21 (LMSI…YLIL), 28–50 (VVVG…AGLQ), and 70–92 (QALI…VLAY).

It belongs to the CPA3 antiporters (TC 2.A.63) subunit C family. Forms a heterooligomeric complex that consists of seven subunits: MrpA, MrpB, MrpC, MrpD, MrpE, MrpF and MrpG.

It localises to the cell membrane. Functionally, mnh complex is a Na(+)Li(+)/H(+) antiporter involved in Na(+) and/or Li(+) excretion and Na(+) resistance. Na(+)/H(+) antiport consumes a transmembrane electrical potential, and is thus inferred to be electrogenic. Does not transport K(+), Ca(2+) or Mg(2+). The sequence is that of Na(+)/H(+) antiporter subunit C (mrpC) from Alkalihalophilus pseudofirmus (strain ATCC BAA-2126 / JCM 17055 / OF4) (Bacillus pseudofirmus).